The chain runs to 256 residues: Dioxygenase lolE1 (256 aa).

Histidine 125, aspartate 127, and histidine 203 together coordinate Fe cation.

It belongs to the PhyH family. In terms of assembly, homodimer. Fe cation serves as cofactor.

It participates in alkaloid biosynthesis. Dioxygenase; part of the gene cluster that mediates the biosynthesis of loline alkaloids, potent insecticidal agents composed of a pyrrolizidine ring system and an uncommon ether bridge linking carbons 2 and 7. Lolines are structurally differentiated by the various modifications of the L-amino group and include norloline, loline, N-methylloline, N-acetylloline, N-acetylnorloline, and N-formylloline. The first committed step is the condensation of O-acetyl-L-homoserine (derived from L-aspartic acid) and L-proline, probably catalyzed by the gamma-type pyridoxal 5'-phosphate(PLP)-dependent enzyme lolC, to give the diamino diacid, NACPP. Ensuing cyclization, decarboxylation, and acetylation steps yield 1-exo-acetamidopyrrolizidine (AcAP). LolO is required for installation of the ether bridge upon the pathway intermediate, 1-exo-acetamidopyrrolizidine (AcAP). In sequential 2-oxoglutarate- and O(2)-consuming steps, lolO removes hydrogens from C2 and C7 of AcAP to form both carbon-oxygen bonds in N-acetylnorloline (NANL), the precursor to all other lolines. The enzymes lolD, lolE, lolF and lolT have also been proposed to be involved in the ether-bridge installation. Further processing of the exocyclic moiety of NANL by fungal N-acetamidase (LolN), methyltransferase (LolM), and cytochrome P450 (LolP) enzymes, with occasional involvement of a plant acetyltransferase, generates the other known lolines. LolN transforms NANL to norlonine which is monomethylated and dimethylated to respectively lonine and N-methyllonine (NML) by lolM. LolP catalyzes hydroxylation of the methyl group in N-methylloline (NML) and further oxygenation to N-formylloline (NFL). A plant acetyltransferase is responsible for the acetylation of loline to form N-acetylloline (NAL). LolA might interact with aspartate kinase to prevent feedback inhibition of its activity by these end products and thereby promote production of L-homoserine from L-aspartate. The polypeptide is Dioxygenase lolE1 (Epichloe uncinata (Endophyte fungus)).